Here is a 139-residue protein sequence, read N- to C-terminus: Antitoxin HicB 2 (139 aa).

The region spanning 87–137 (MLQTRTSNAELARLLGTRPQEIQRIVSLSHSTKIDTIANALNALGKHLELV) is the HTH cro/C1-type domain. Positions 96–113 (ELARLLGTRPQEIQRIVS) form a DNA-binding region, H-T-H motif.

Belongs to the HicB antitoxin family. Probably forms a complex with the probable mRNA interferase HicA2 (its cognate toxin); when complexed with HicA inhibits the toxin activity.

In terms of biological role, antitoxin component of a type II toxin-antitoxin (TA) system. Functions as an mRNA interferase antitoxin preventing effects of the HicA 2 toxin. This chain is Antitoxin HicB 2 (hicB2), found in Photorhabdus laumondii subsp. laumondii (strain DSM 15139 / CIP 105565 / TT01) (Photorhabdus luminescens subsp. laumondii).